The following is a 603-amino-acid chain: Sorting nexin-41 (603 aa).

Positions 1–36 (MNSFRESDEEDNNPFSGTNHLYASGIGAVPEGDDDF) are disordered. The PX domain maps to 121 to 241 (AEGSLGALRI…QKFLNPEYIW (121 aa)). The a 1,2-diacyl-sn-glycero-3-phospho-(1D-myo-inositol-3-phosphate) site is built by Arg159, Ser161, Lys185, and Arg208.

It belongs to the sorting nexin family.

The protein resides in the endosome membrane. It is found in the endomembrane system. In terms of biological role, may be required for cytoplasm to vacuole transport (Cvt) and pexophagy. This is Sorting nexin-41 (SNX41) from Eremothecium gossypii (strain ATCC 10895 / CBS 109.51 / FGSC 9923 / NRRL Y-1056) (Yeast).